The chain runs to 235 residues: Ion-translocating oxidoreductase complex subunit E (235 aa).

A run of 5 helical transmembrane segments spans residues 63 to 83, 93 to 113, 117 to 137, 152 to 172, and 206 to 226; these read LGLS…ISLF, IPIY…LMNA, TLYQ…IIIG, IWDG…LGAL, and SFLL…LLAI.

It belongs to the NqrDE/RnfAE family. As to quaternary structure, the complex is composed of six subunits: RnfA, RnfB, RnfC, RnfD, RnfE and RnfG.

It is found in the cell inner membrane. Part of a membrane-bound complex that couples electron transfer with translocation of ions across the membrane. The sequence is that of Ion-translocating oxidoreductase complex subunit E from Haemophilus influenzae (strain PittEE).